Here is a 357-residue protein sequence, read N- to C-terminus: DNA replication and repair protein RecF (357 aa).

30–37 contributes to the ATP binding site; sequence GANGSGKT.

The protein belongs to the RecF family.

The protein resides in the cytoplasm. The RecF protein is involved in DNA metabolism; it is required for DNA replication and normal SOS inducibility. RecF binds preferentially to single-stranded, linear DNA. It also seems to bind ATP. In Cronobacter sakazakii (strain ATCC BAA-894) (Enterobacter sakazakii), this protein is DNA replication and repair protein RecF.